The primary structure comprises 429 residues: Adenylosuccinate synthetase (429 aa).

GTP is bound by residues 12-18 and 40-42; these read GDEGKGK and GHT. Residue Asp13 is the Proton acceptor of the active site. Residues Asp13 and Gly40 each contribute to the Mg(2+) site. IMP-binding positions include 13–16, 38–41, Thr128, Arg142, Gln223, Thr238, and Arg302; these read DEGK and NAGH. His41 serves as the catalytic Proton donor. 298–304 is a binding site for substrate; the sequence is TTTGRPR. GTP-binding positions include Arg304, 330 to 332, and 412 to 414; these read SID and SVG.

This sequence belongs to the adenylosuccinate synthetase family. In terms of assembly, homodimer. It depends on Mg(2+) as a cofactor.

It localises to the cytoplasm. It catalyses the reaction IMP + L-aspartate + GTP = N(6)-(1,2-dicarboxyethyl)-AMP + GDP + phosphate + 2 H(+). The protein operates within purine metabolism; AMP biosynthesis via de novo pathway; AMP from IMP: step 1/2. Functionally, plays an important role in the de novo pathway of purine nucleotide biosynthesis. Catalyzes the first committed step in the biosynthesis of AMP from IMP. This chain is Adenylosuccinate synthetase, found in Bacillus cereus (strain ATCC 14579 / DSM 31 / CCUG 7414 / JCM 2152 / NBRC 15305 / NCIMB 9373 / NCTC 2599 / NRRL B-3711).